Here is a 64-residue protein sequence, read N- to C-terminus: Defensin-like protein 41 (64 aa).

Positions 1-21 (MTQGKRKHPCDLKNPSKRAPP) are disordered. Intrachain disulfides connect C10–C61, C24–C47, C33–C56, and C37–C58.

Belongs to the DEFL family.

The polypeptide is Defensin-like protein 41 (Arabidopsis thaliana (Mouse-ear cress)).